The following is a 199-amino-acid chain: Imidazoleglycerol-phosphate dehydratase (199 aa).

Belongs to the imidazoleglycerol-phosphate dehydratase family.

The protein resides in the cytoplasm. The enzyme catalyses D-erythro-1-(imidazol-4-yl)glycerol 3-phosphate = 3-(imidazol-4-yl)-2-oxopropyl phosphate + H2O. The protein operates within amino-acid biosynthesis; L-histidine biosynthesis; L-histidine from 5-phospho-alpha-D-ribose 1-diphosphate: step 6/9. This is Imidazoleglycerol-phosphate dehydratase from Mesorhizobium japonicum (strain LMG 29417 / CECT 9101 / MAFF 303099) (Mesorhizobium loti (strain MAFF 303099)).